The primary structure comprises 222 residues: Putative germin-like protein subfamily 1 member 9 (222 aa).

Residues 1–22 (MKSFSFLAVLSILAITLSLSKA) form the signal peptide. Cys32 and Cys49 are joined by a disulfide. The Cupin type-1 domain maps to 63–213 (TGLHEARPPN…AFQVDPKIVM (151 aa)). An N-linked (GlcNAc...) asparagine glycan is attached at Asn78. Positions 111, 113, 118, and 159 each coordinate Mn(2+).

It belongs to the germin family. As to quaternary structure, oligomer (believed to be a pentamer but probably hexamer).

The protein resides in the secreted. The protein localises to the extracellular space. It is found in the apoplast. In terms of biological role, may play a role in plant defense. Probably has no oxalate oxidase activity even if the active site is conserved. The sequence is that of Putative germin-like protein subfamily 1 member 9 from Arabidopsis thaliana (Mouse-ear cress).